Here is a 482-residue protein sequence, read N- to C-terminus: UDP-N-acetylmuramate--L-alanine ligase (482 aa).

Position 122-128 (122-128 (GTHGKTT)) interacts with ATP.

It belongs to the MurCDEF family.

It localises to the cytoplasm. It catalyses the reaction UDP-N-acetyl-alpha-D-muramate + L-alanine + ATP = UDP-N-acetyl-alpha-D-muramoyl-L-alanine + ADP + phosphate + H(+). Its pathway is cell wall biogenesis; peptidoglycan biosynthesis. Cell wall formation. The chain is UDP-N-acetylmuramate--L-alanine ligase from Mycolicibacterium smegmatis (strain ATCC 700084 / mc(2)155) (Mycobacterium smegmatis).